A 284-amino-acid polypeptide reads, in one-letter code: TnP I resolvase (284 aa).

In terms of domain architecture, Core-binding (CB) spans 1-84 (MDVAKQFSSY…SLAKFNEFLI (84 aa)). Residues 107–282 (ASPTQIVELD…NQLQLKNKME (176 aa)) form the Tyr recombinase domain. Active-site residues include R145, K170, H234, R237, and H260. Y269 acts as the O-(3'-phospho-DNA)-tyrosine intermediate in catalysis.

It belongs to the 'phage' integrase family.

Functionally, resolvase catalyzes the resolution (a site-specific recombination) of the cointegrated replicon to yield the final transposition products. This Bacillus thuringiensis protein is TnP I resolvase (tnpI).